The chain runs to 310 residues: Putative integrase/recombinase y4rE (310 aa).

The 78-residue stretch at 6-83 folds into the Core-binding (CB) domain; sequence RFLGEKVERY…VLRRFYEYLA (78 aa). In terms of domain architecture, Tyr recombinase spans 104–301; it reads PPPRILSEAE…SVDLLAMAAE (198 aa). Residues arginine 148, lysine 173, histidine 245, arginine 248, and histidine 279 contribute to the active site. Tyrosine 288 (O-(3'-phospho-DNA)-tyrosine intermediate) is an active-site residue.

It belongs to the 'phage' integrase family.

The polypeptide is Putative integrase/recombinase y4rE (Sinorhizobium fredii (strain NBRC 101917 / NGR234)).